Here is a 397-residue protein sequence, read N- to C-terminus: Bifunctional enzyme IspD/IspF (397 aa).

Residues Met-1 to Ile-236 form a 2-C-methyl-D-erythritol 4-phosphate cytidylyltransferase region. Residues Arg-237–Lys-397 are 2-C-methyl-D-erythritol 2,4-cyclodiphosphate synthase. The a divalent metal cation site is built by Asp-243 and His-245. 4-CDP-2-C-methyl-D-erythritol 2-phosphate contacts are provided by residues Asp-243–His-245 and His-269–Ser-270. His-277 contributes to the a divalent metal cation binding site. 4-CDP-2-C-methyl-D-erythritol 2-phosphate is bound by residues Asp-291 to Gly-293, Thr-367 to Glu-370, Phe-374, and Arg-377.

The protein in the N-terminal section; belongs to the IspD/TarI cytidylyltransferase family. IspD subfamily. It in the C-terminal section; belongs to the IspF family. A divalent metal cation is required as a cofactor.

It carries out the reaction 2-C-methyl-D-erythritol 4-phosphate + CTP + H(+) = 4-CDP-2-C-methyl-D-erythritol + diphosphate. The enzyme catalyses 4-CDP-2-C-methyl-D-erythritol 2-phosphate = 2-C-methyl-D-erythritol 2,4-cyclic diphosphate + CMP. It participates in isoprenoid biosynthesis; isopentenyl diphosphate biosynthesis via DXP pathway; isopentenyl diphosphate from 1-deoxy-D-xylulose 5-phosphate: step 2/6. It functions in the pathway isoprenoid biosynthesis; isopentenyl diphosphate biosynthesis via DXP pathway; isopentenyl diphosphate from 1-deoxy-D-xylulose 5-phosphate: step 4/6. Its function is as follows. Bifunctional enzyme that catalyzes the formation of 4-diphosphocytidyl-2-C-methyl-D-erythritol from CTP and 2-C-methyl-D-erythritol 4-phosphate (MEP) (IspD), and catalyzes the conversion of 4-diphosphocytidyl-2-C-methyl-D-erythritol 2-phosphate (CDP-ME2P) to 2-C-methyl-D-erythritol 2,4-cyclodiphosphate (ME-CPP) with a corresponding release of cytidine 5-monophosphate (CMP) (IspF). In Bartonella bacilliformis (strain ATCC 35685 / KC583 / Herrer 020/F12,63), this protein is Bifunctional enzyme IspD/IspF.